Here is a 153-residue protein sequence, read N- to C-terminus: ORM1-like protein 3 (153 aa).

Residues 1 to 17 (MNVGTAHSEVNPNTRVM) form an important for ceramide level-sensing region. Residues 1–21 (MNVGTAHSEVNPNTRVMNSRG) lie on the Cytoplasmic side of the membrane. Transmembrane regions (helical) follow at residues 22 to 42 (IWLSYVLAIGLLHVVLLSIPF) and 43 to 63 (VSVPVVWTLTNLIHNMGMYIF). The Cytoplasmic segment spans residues 64–94 (LHTVKGTPFETPDQGKARLLTHWEQMDYGVQ). Residues 95 to 117 (FTASRKFLTITPIVLYFLTSFYT) form a helical membrane-spanning segment. Over 118-121 (KYDQ) the chain is Extracellular. A helical membrane pass occupies residues 122 to 142 (IHFILNTVSLMSVLIPKLPQL). Hydroxyproline is present on P137. The Cytoplasmic portion of the chain corresponds to 143–153 (HGVRIFGINKY).

Belongs to the ORM family. Ceramide-sensitive subunit of the serine palmitoyltransferase (SPT) complex, which is also composed of SPTLC1, SPTLC2/3 and SPTSSA/B. When hydroxylated at Pro-137, ubiquitinated via 'Lys-48'-linkage, leading to proteasomal degradation. In endothelial cells, ORMDL3 proteasomal degradation is controlled by the sphingosine 1-phosphate receptor signaling pathway.

The protein localises to the endoplasmic reticulum membrane. Plays an essential role in the homeostatic regulation of sphingolipid de novo biosynthesis by modulating the activity of the serine palmitoyltransferase (SPT) in response to ceramide levels. When complexed to SPT, the binding of ceramides to its N-terminus stabilizes a conformation that block SPT substrate entry, hence preventing SPT catalytic activity. Through this mechanism, maintains ceramide levels at sufficient concentrations for the production of complex sphingolipids, but which prevents the accumulation of ceramides to levels that trigger apoptosis. The polypeptide is ORM1-like protein 3 (ORMDL3) (Bos taurus (Bovine)).